We begin with the raw amino-acid sequence, 461 residues long: Probable outer membrane lipoprotein SilC (461 aa).

The first 17 residues, 1 to 17, serve as a signal peptide directing secretion; the sequence is MFKLKLLSISTIFILAG. The N-palmitoyl cysteine moiety is linked to residue Cys-18. Cys-18 carries the S-diacylglycerol cysteine lipid modification.

Belongs to the outer membrane factor (OMF) (TC 1.B.17) family.

The protein resides in the cell outer membrane. Functionally, component of the sil cation-efflux system that confers resistance to silver. May be part of a three-component cation/proton antiporter. This Salmonella typhimurium protein is Probable outer membrane lipoprotein SilC (silC).